Consider the following 414-residue polypeptide: uncharacterized protein (414 aa).

3 disordered regions span residues 136–168 (SSKS…TVPT), 297–333 (PQNF…ENAS), and 346–414 (ALNA…NGSK). The span at 350–359 (PSRSRPTHGS) shows a compositional bias: polar residues. Residues 399–414 (SKSEKIYPEPRRNGSK) show a composition bias toward basic and acidic residues.

This is an uncharacterized protein from Homo sapiens (Human).